We begin with the raw amino-acid sequence, 317 residues long: Universal stress protein Mb2019 (317 aa).

Residues Gly13, 128 to 134 (GYRGQGA), 142 to 143 (SV), Gly175, Asp208, 277 to 283 (GSHGRGG), and 291 to 293 (SVS) contribute to the ATP site.

The protein belongs to the universal stress protein A family.

The chain is Universal stress protein Mb2019 from Mycobacterium bovis (strain ATCC BAA-935 / AF2122/97).